The chain runs to 316 residues: Beta-ketoacyl-[acyl-carrier-protein] synthase III (316 aa).

Residues Cys-112 and His-243 contribute to the active site. The tract at residues 244–248 is ACP-binding; that stretch reads QANLR. Asn-273 is an active-site residue.

The protein belongs to the thiolase-like superfamily. FabH family. In terms of assembly, homodimer.

It is found in the cytoplasm. It catalyses the reaction malonyl-[ACP] + acetyl-CoA + H(+) = 3-oxobutanoyl-[ACP] + CO2 + CoA. Its pathway is lipid metabolism; fatty acid biosynthesis. In terms of biological role, catalyzes the condensation reaction of fatty acid synthesis by the addition to an acyl acceptor of two carbons from malonyl-ACP. Catalyzes the first condensation reaction which initiates fatty acid synthesis and may therefore play a role in governing the total rate of fatty acid production. Possesses both acetoacetyl-ACP synthase and acetyl transacylase activities. Its substrate specificity determines the biosynthesis of branched-chain and/or straight-chain of fatty acids. The protein is Beta-ketoacyl-[acyl-carrier-protein] synthase III of Histophilus somni (strain 129Pt) (Haemophilus somnus).